A 151-amino-acid polypeptide reads, in one-letter code: Ribosomal RNA large subunit methyltransferase H (151 aa).

S-adenosyl-L-methionine-binding positions include Leu73, Gly100, and 119–124 (LSKMTL).

It belongs to the RNA methyltransferase RlmH family. Homodimer.

It is found in the cytoplasm. It catalyses the reaction pseudouridine(1915) in 23S rRNA + S-adenosyl-L-methionine = N(3)-methylpseudouridine(1915) in 23S rRNA + S-adenosyl-L-homocysteine + H(+). In terms of biological role, specifically methylates the pseudouridine at position 1915 (m3Psi1915) in 23S rRNA. The polypeptide is Ribosomal RNA large subunit methyltransferase H (Campylobacter lari (strain RM2100 / D67 / ATCC BAA-1060)).